The sequence spans 300 residues: F-box/LRR-repeat protein 15 (300 aa).

N-acetylmethionine is present on Met-1. One can recognise an F-box domain in the interval 19–66 (LLDLPWEDVLLPHVLNWVPLRQLLRLQRVSRAFRALVQLHLARLRRFD). The interval 113–269 (NPQLRSVALA…EPSLSRLRKR (157 aa)) is interaction with SMURF1. 5 LRR repeats span residues 141 to 162 (RLQR…RGLA), 167 to 188 (ALEE…VYLA), 194 to 215 (GLRS…QELA), 220 to 241 (QLEH…RTLA), and 246 to 267 (ALRS…SRLR).

This sequence belongs to the FBXL15 family. As to quaternary structure, part of the SCF (SKP1-CUL1-F-box) E3 ubiquitin-protein ligase complex SCF(FBXL15) composed of CUL1, SKP1, RBX1 and FBXL15. As to expression, expressed in heart, liver, spleen, bone, muscle, brain and kidney (at protein level).

It is found in the cytoplasm. Its pathway is protein modification; protein ubiquitination. Its function is as follows. Substrate recognition component of a SCF (SKP1-CUL1-F-box protein) E3 ubiquitin-protein ligase complex which mediates the ubiquitination and subsequent proteasomal degradation of SMURF1, thereby acting as a positive regulator of the BMP signaling pathway. Required for dorsal/ventral pattern formation and bone mass maintenance. Also mediates ubiquitination of SMURF2 and WWP2. In Mus musculus (Mouse), this protein is F-box/LRR-repeat protein 15 (Fbxl15).